The primary structure comprises 88 residues: Small ribosomal subunit protein bS16c (88 aa).

This sequence belongs to the bacterial ribosomal protein bS16 family.

The protein localises to the plastid. It is found in the chloroplast. In Calycanthus floridus var. glaucus (Eastern sweetshrub), this protein is Small ribosomal subunit protein bS16c.